The chain runs to 475 residues: tRNA modification GTPase MnmE (475 aa).

3 residues coordinate (6S)-5-formyl-5,6,7,8-tetrahydrofolate: Arg24, Glu81, and Lys124. Residues 220-397 (GLSVVLAGQP…LRRELLRLVG (178 aa)) form the TrmE-type G domain. Asn230 is a binding site for K(+). Residues 230–235 (NVGKSS), 249–255 (TPIAGTT), 274–277 (DTAG), and 378–380 (SAR) each bind GTP. Position 234 (Ser234) interacts with Mg(2+). Positions 249, 251, and 254 each coordinate K(+). Residue Thr255 participates in Mg(2+) binding. Residue Lys475 coordinates (6S)-5-formyl-5,6,7,8-tetrahydrofolate.

Belongs to the TRAFAC class TrmE-Era-EngA-EngB-Septin-like GTPase superfamily. TrmE GTPase family. As to quaternary structure, homodimer. Heterotetramer of two MnmE and two MnmG subunits. K(+) is required as a cofactor.

It is found in the cytoplasm. Its function is as follows. Exhibits a very high intrinsic GTPase hydrolysis rate. Involved in the addition of a carboxymethylaminomethyl (cmnm) group at the wobble position (U34) of certain tRNAs, forming tRNA-cmnm(5)s(2)U34. This is tRNA modification GTPase MnmE from Cupriavidus necator (strain ATCC 17699 / DSM 428 / KCTC 22496 / NCIMB 10442 / H16 / Stanier 337) (Ralstonia eutropha).